Here is a 303-residue protein sequence, read N- to C-terminus: Glycine--tRNA ligase alpha subunit (303 aa).

Belongs to the class-II aminoacyl-tRNA synthetase family. As to quaternary structure, tetramer of two alpha and two beta subunits.

It is found in the cytoplasm. The catalysed reaction is tRNA(Gly) + glycine + ATP = glycyl-tRNA(Gly) + AMP + diphosphate. The chain is Glycine--tRNA ligase alpha subunit from Stenotrophomonas maltophilia (strain K279a).